The sequence spans 199 residues: Crossover junction endodeoxyribonuclease RuvC (199 aa).

Catalysis depends on residues Asp7, Glu68, and Asp141. Residues Asp7, Glu68, and Asp141 each contribute to the Mg(2+) site.

It belongs to the RuvC family. Homodimer which binds Holliday junction (HJ) DNA. The HJ becomes 2-fold symmetrical on binding to RuvC with unstacked arms; it has a different conformation from HJ DNA in complex with RuvA. In the full resolvosome a probable DNA-RuvA(4)-RuvB(12)-RuvC(2) complex forms which resolves the HJ. It depends on Mg(2+) as a cofactor.

Its subcellular location is the cytoplasm. The catalysed reaction is Endonucleolytic cleavage at a junction such as a reciprocal single-stranded crossover between two homologous DNA duplexes (Holliday junction).. In terms of biological role, the RuvA-RuvB-RuvC complex processes Holliday junction (HJ) DNA during genetic recombination and DNA repair. Endonuclease that resolves HJ intermediates. Cleaves cruciform DNA by making single-stranded nicks across the HJ at symmetrical positions within the homologous arms, yielding a 5'-phosphate and a 3'-hydroxyl group; requires a central core of homology in the junction. The consensus cleavage sequence is 5'-(A/T)TT(C/G)-3'. Cleavage occurs on the 3'-side of the TT dinucleotide at the point of strand exchange. HJ branch migration catalyzed by RuvA-RuvB allows RuvC to scan DNA until it finds its consensus sequence, where it cleaves and resolves the cruciform DNA. In Saccharopolyspora erythraea (strain ATCC 11635 / DSM 40517 / JCM 4748 / NBRC 13426 / NCIMB 8594 / NRRL 2338), this protein is Crossover junction endodeoxyribonuclease RuvC.